Reading from the N-terminus, the 128-residue chain is Glycine cleavage system H protein (128 aa).

Residues 24 to 106 form the Lipoyl-binding domain; that stretch reads VATVGITAFA…YNNGWLLKIK (83 aa). N6-lipoyllysine is present on Lys-65.

This sequence belongs to the GcvH family. In terms of assembly, the glycine cleavage system is composed of four proteins: P, T, L and H. Requires (R)-lipoate as cofactor.

Its function is as follows. The glycine cleavage system catalyzes the degradation of glycine. The H protein shuttles the methylamine group of glycine from the P protein to the T protein. This Acaryochloris marina (strain MBIC 11017) protein is Glycine cleavage system H protein.